A 101-amino-acid polypeptide reads, in one-letter code: NAD(P)H-quinone oxidoreductase subunit 4L, chloroplastic (101 aa).

Transmembrane regions (helical) follow at residues 2–22, 32–52, and 61–81; these read MLEH…YGLI, MCLE…SDLF, and IFSI…LAII.

It belongs to the complex I subunit 4L family. In terms of assembly, NDH is composed of at least 16 different subunits, 5 of which are encoded in the nucleus.

The protein localises to the plastid. Its subcellular location is the chloroplast thylakoid membrane. The catalysed reaction is a plastoquinone + NADH + (n+1) H(+)(in) = a plastoquinol + NAD(+) + n H(+)(out). The enzyme catalyses a plastoquinone + NADPH + (n+1) H(+)(in) = a plastoquinol + NADP(+) + n H(+)(out). Functionally, NDH shuttles electrons from NAD(P)H:plastoquinone, via FMN and iron-sulfur (Fe-S) centers, to quinones in the photosynthetic chain and possibly in a chloroplast respiratory chain. The immediate electron acceptor for the enzyme in this species is believed to be plastoquinone. Couples the redox reaction to proton translocation, and thus conserves the redox energy in a proton gradient. The protein is NAD(P)H-quinone oxidoreductase subunit 4L, chloroplastic of Ranunculus macranthus (Large buttercup).